Reading from the N-terminus, the 335-residue chain is Geranylgeranyl pyrophosphate synthase BTS1 (335 aa).

The isopentenyl diphosphate site is built by lysine 36, arginine 39, and histidine 68. Mg(2+) contacts are provided by aspartate 75 and aspartate 79. Arginine 84 is a binding site for dimethylallyl diphosphate. Residue arginine 85 coordinates isopentenyl diphosphate. Residues lysine 169, threonine 170, glutamine 206, asparagine 213, lysine 223, and lysine 233 each contribute to the dimethylallyl diphosphate site.

The protein belongs to the FPP/GGPP synthase family. Mg(2+) is required as a cofactor.

Its subcellular location is the cytoplasm. The enzyme catalyses isopentenyl diphosphate + dimethylallyl diphosphate = (2E)-geranyl diphosphate + diphosphate. It carries out the reaction isopentenyl diphosphate + (2E)-geranyl diphosphate = (2E,6E)-farnesyl diphosphate + diphosphate. It catalyses the reaction isopentenyl diphosphate + (2E,6E)-farnesyl diphosphate = (2E,6E,10E)-geranylgeranyl diphosphate + diphosphate. It functions in the pathway isoprenoid biosynthesis; farnesyl diphosphate biosynthesis; farnesyl diphosphate from geranyl diphosphate and isopentenyl diphosphate: step 1/1. Its pathway is isoprenoid biosynthesis; geranyl diphosphate biosynthesis; geranyl diphosphate from dimethylallyl diphosphate and isopentenyl diphosphate: step 1/1. The protein operates within isoprenoid biosynthesis; geranylgeranyl diphosphate biosynthesis; geranylgeranyl diphosphate from farnesyl diphosphate and isopentenyl diphosphate: step 1/1. Functionally, catalyzes the trans-addition of the 3 molecules of IPP onto DMAPP to form geranylgeranyl pyrophosphate. Required for the membrane attachment of YPT1 and SEC4. May be involved in vesicle trafficking and protein sorting. This is Geranylgeranyl pyrophosphate synthase BTS1 (BTS1) from Saccharomyces cerevisiae (strain ATCC 204508 / S288c) (Baker's yeast).